The chain runs to 185 residues: Ribosome-recycling factor (185 aa).

This sequence belongs to the RRF family.

It is found in the cytoplasm. In terms of biological role, responsible for the release of ribosomes from messenger RNA at the termination of protein biosynthesis. May increase the efficiency of translation by recycling ribosomes from one round of translation to another. The sequence is that of Ribosome-recycling factor from Campylobacter hominis (strain ATCC BAA-381 / DSM 21671 / CCUG 45161 / LMG 19568 / NCTC 13146 / CH001A).